The following is a 437-amino-acid chain: Trypacidin cluster transcriptional coactivator tpcD (437 aa).

In terms of domain architecture, HTH iclR-type spans 75–144 (LAVQSQLLSC…PQRGHVAHSP (70 aa)). Positions 105-124 (IADLARLSGVPEAQLARIIR) form a DNA-binding region, H-T-H motif.

Specifically expressed in conidia.

The protein localises to the nucleus. Its function is as follows. Transcriptional coactivator; part of the gene cluster that mediates the biosynthesis of trypacidin, a mycotoxin with antiprotozoal activity and that plays a role in the infection process. With tpcE, coregulates the production of trypacidin. The polypeptide is Trypacidin cluster transcriptional coactivator tpcD (Aspergillus fumigatus (strain ATCC MYA-4609 / CBS 101355 / FGSC A1100 / Af293) (Neosartorya fumigata)).